A 236-amino-acid chain; its full sequence is Purine nucleoside phosphorylase DeoD-type (236 aa).

His5 is an a purine D-ribonucleoside binding site. Phosphate contacts are provided by residues Gly21, Arg25, Arg44, and 88 to 91 (RVGS). A purine D-ribonucleoside is bound by residues 180-182 (DME) and 204-205 (SD). The Proton donor role is filled by Asp205.

The protein belongs to the PNP/UDP phosphorylase family. As to quaternary structure, homohexamer; trimer of homodimers.

It carries out the reaction a purine D-ribonucleoside + phosphate = a purine nucleobase + alpha-D-ribose 1-phosphate. The enzyme catalyses a purine 2'-deoxy-D-ribonucleoside + phosphate = a purine nucleobase + 2-deoxy-alpha-D-ribose 1-phosphate. Catalyzes the reversible phosphorolytic breakdown of the N-glycosidic bond in the beta-(deoxy)ribonucleoside molecules, with the formation of the corresponding free purine bases and pentose-1-phosphate. This Aliivibrio salmonicida (strain LFI1238) (Vibrio salmonicida (strain LFI1238)) protein is Purine nucleoside phosphorylase DeoD-type.